A 143-amino-acid chain; its full sequence is Cofilin (143 aa).

In terms of domain architecture, ADF-H spans 5–137; sequence GVAVADESLT…AYESVLEKVS (133 aa).

It belongs to the actin-binding proteins ADF family.

It is found in the cytoplasm. Its subcellular location is the cytoskeleton. The protein localises to the nucleus matrix. Controls reversibly actin polymerization and depolymerization in a pH-sensitive manner. It has the ability to bind G- and F-actin in a 1:1 ratio of cofilin to actin. Binding to F-actin is regulated by tropomyosin. It is the major component of intranuclear and cytoplasmic actin rods. Required for accumulation of actin at the cell division site via depolymerizing actin at the cell ends. In association with myosin II has a role in the assembly of the contractile ring via severing actin filaments. Involved in the maintenance of the contractile ring once formed. In association with profilin and capping protein, has a role in the mitotic reorganization of the actin cytoskeleton. The polypeptide is Cofilin (COF1) (Eremothecium gossypii (strain ATCC 10895 / CBS 109.51 / FGSC 9923 / NRRL Y-1056) (Yeast)).